The chain runs to 341 residues: Protein-glutamate methylesterase/protein-glutamine glutaminase 1 (341 aa).

Residues 2-119 form the Response regulatory domain; that stretch reads KVGIVNDSAL…SDAKLTAGPL (118 aa). D53 is subject to 4-aspartylphosphate. One can recognise a CheB-type methylesterase domain in the interval 146-331; the sequence is TLAASRLVAI…LTAIAPRLVQ (186 aa). Catalysis depends on residues S158, H185, and D278.

This sequence belongs to the CheB family. In terms of processing, phosphorylated by CheA. Phosphorylation of the N-terminal regulatory domain activates the methylesterase activity.

The protein resides in the cytoplasm. The enzyme catalyses [protein]-L-glutamate 5-O-methyl ester + H2O = L-glutamyl-[protein] + methanol + H(+). The catalysed reaction is L-glutaminyl-[protein] + H2O = L-glutamyl-[protein] + NH4(+). In terms of biological role, involved in chemotaxis. Part of a chemotaxis signal transduction system that modulates chemotaxis in response to various stimuli. Catalyzes the demethylation of specific methylglutamate residues introduced into the chemoreceptors (methyl-accepting chemotaxis proteins or MCP) by CheR. Also mediates the irreversible deamidation of specific glutamine residues to glutamic acid. The protein is Protein-glutamate methylesterase/protein-glutamine glutaminase 1 of Cupriavidus pinatubonensis (strain JMP 134 / LMG 1197) (Cupriavidus necator (strain JMP 134)).